The sequence spans 219 residues: Proline-rich protein 27 (219 aa).

The N-terminal stretch at 1-15 (MKLLLWACIVCVAFA) is a signal peptide. Positions 155 to 204 (AAEPAAEAPVGAEPAAEAPVAAEPAAEAPVGVEPAAEEPSPAEPATAKPA) are enriched in low complexity. The tract at residues 155–219 (AAEPAAEAPV…PSPSLEQANQ (65 aa)) is disordered.

Its subcellular location is the secreted. The polypeptide is Proline-rich protein 27 (PRR27) (Homo sapiens (Human)).